The chain runs to 153 residues: Endoribonuclease YbeY (153 aa).

Residues H118, H122, and H128 each coordinate Zn(2+).

Belongs to the endoribonuclease YbeY family. Requires Zn(2+) as cofactor.

The protein localises to the cytoplasm. Single strand-specific metallo-endoribonuclease involved in late-stage 70S ribosome quality control and in maturation of the 3' terminus of the 16S rRNA. The sequence is that of Endoribonuclease YbeY from Oenococcus oeni (strain ATCC BAA-331 / PSU-1).